The primary structure comprises 161 residues: Putative pre-16S rRNA nuclease (161 aa).

Positions 141-161 are disordered; that stretch reads AAGSPPGALVPRNRVDPDRHA.

It belongs to the YqgF nuclease family.

The protein resides in the cytoplasm. Functionally, could be a nuclease involved in processing of the 5'-end of pre-16S rRNA. This Clavibacter michiganensis subsp. michiganensis (strain NCPPB 382) protein is Putative pre-16S rRNA nuclease.